Reading from the N-terminus, the 353-residue chain is uncharacterized protein (353 aa).

D212, D223, H287, E316, and E330 together coordinate Mn(2+).

It belongs to the peptidase M24B family. Mn(2+) serves as cofactor.

This is an uncharacterized protein from Bacillus subtilis (strain 168).